The primary structure comprises 314 residues: Probable cell division protein WhiA (314 aa).

Residues 274–308 (SLKELGEMVSTGPISKSGMNHRLRKLNELADKIRN) constitute a DNA-binding region (H-T-H motif).

It belongs to the WhiA family.

Functionally, involved in cell division and chromosome segregation. In Staphylococcus epidermidis (strain ATCC 35984 / DSM 28319 / BCRC 17069 / CCUG 31568 / BM 3577 / RP62A), this protein is Probable cell division protein WhiA.